Here is a 480-residue protein sequence, read N- to C-terminus: Cysteine--tRNA ligase (480 aa).

Cysteine 29 provides a ligand contact to Zn(2+). The 'HIGH' region motif lies at 31-41; sequence ITVYDYCHLGH. The Zn(2+) site is built by cysteine 215, histidine 240, and glutamate 244. The 'KMSKS' region motif lies at 272–276; sequence KMSKS. Lysine 275 provides a ligand contact to ATP.

This sequence belongs to the class-I aminoacyl-tRNA synthetase family. As to quaternary structure, monomer. The cofactor is Zn(2+).

The protein resides in the cytoplasm. The enzyme catalyses tRNA(Cys) + L-cysteine + ATP = L-cysteinyl-tRNA(Cys) + AMP + diphosphate. This chain is Cysteine--tRNA ligase, found in Microcystis aeruginosa (strain NIES-843 / IAM M-2473).